A 119-amino-acid polypeptide reads, in one-letter code: Large ribosomal subunit protein bL20 (119 aa).

It belongs to the bacterial ribosomal protein bL20 family.

Functionally, binds directly to 23S ribosomal RNA and is necessary for the in vitro assembly process of the 50S ribosomal subunit. It is not involved in the protein synthesizing functions of that subunit. This chain is Large ribosomal subunit protein bL20, found in Coxiella burnetii (strain CbuK_Q154) (Coxiella burnetii (strain Q154)).